The primary structure comprises 332 residues: MNAEHAPFRHYLDLADARLGSQVVAVSDEWFAPASRMLQAGEPVWKEGVFDDSGKWMDGWETRRKRFEGHDQAVIRLGVPGVLKGVDIDTRFFTGNHPPAASLDGCFCAEGDPDDSTSWSEVLAAVGLQGDSHHYHPIDDERPWTHLRLNIYPDGGIARLRLYGVPYRDWSNQPPGTALDLAAAVNGGRALACSDQHFGRMGNLLNPGRAINMGDGWETGRRRTPGHDWVIVALGHPGSIEAAVVDTLHFKGNYPESCSIQAAFVEGGNEARIEAQSLFWRELLPAQKLEMHQEHRFERHLNALGPITHVRLNIFPDGGVSRLRLFGRPQLP.

This sequence belongs to the allantoicase family.

The enzyme catalyses allantoate + H2O = (S)-ureidoglycolate + urea. It functions in the pathway nitrogen metabolism; (S)-allantoin degradation; (S)-ureidoglycolate from allantoate (aminidohydrolase route): step 1/1. The protein is Probable allantoicase of Pseudomonas aeruginosa (strain LESB58).